Consider the following 404-residue polypeptide: Probable tRNA sulfurtransferase (404 aa).

A THUMP domain is found at 60–165 (EEVIPKLSKV…KDAAYLSYET (106 aa)). ATP-binding positions include 183-184 (ML), 208-209 (HF), Arg-265, Gly-287, and Gln-296.

Belongs to the ThiI family.

The protein resides in the cytoplasm. The catalysed reaction is [ThiI sulfur-carrier protein]-S-sulfanyl-L-cysteine + a uridine in tRNA + 2 reduced [2Fe-2S]-[ferredoxin] + ATP + H(+) = [ThiI sulfur-carrier protein]-L-cysteine + a 4-thiouridine in tRNA + 2 oxidized [2Fe-2S]-[ferredoxin] + AMP + diphosphate. The enzyme catalyses [ThiS sulfur-carrier protein]-C-terminal Gly-Gly-AMP + S-sulfanyl-L-cysteinyl-[cysteine desulfurase] + AH2 = [ThiS sulfur-carrier protein]-C-terminal-Gly-aminoethanethioate + L-cysteinyl-[cysteine desulfurase] + A + AMP + 2 H(+). It functions in the pathway cofactor biosynthesis; thiamine diphosphate biosynthesis. In terms of biological role, catalyzes the ATP-dependent transfer of a sulfur to tRNA to produce 4-thiouridine in position 8 of tRNAs, which functions as a near-UV photosensor. Also catalyzes the transfer of sulfur to the sulfur carrier protein ThiS, forming ThiS-thiocarboxylate. This is a step in the synthesis of thiazole, in the thiamine biosynthesis pathway. The sulfur is donated as persulfide by IscS. The protein is Probable tRNA sulfurtransferase of Enterococcus faecalis (strain ATCC 700802 / V583).